The sequence spans 425 residues: Glutamyl-tRNA reductase (425 aa).

Residues 49–52 (TCNR), S107, 112–114 (EPQ), and Q118 each bind substrate. Residue C50 is the Nucleophile of the active site. 187-192 (GAGETI) is a binding site for NADP(+).

It belongs to the glutamyl-tRNA reductase family. In terms of assembly, homodimer.

It catalyses the reaction (S)-4-amino-5-oxopentanoate + tRNA(Glu) + NADP(+) = L-glutamyl-tRNA(Glu) + NADPH + H(+). It functions in the pathway porphyrin-containing compound metabolism; protoporphyrin-IX biosynthesis; 5-aminolevulinate from L-glutamyl-tRNA(Glu): step 1/2. In terms of biological role, catalyzes the NADPH-dependent reduction of glutamyl-tRNA(Glu) to glutamate 1-semialdehyde (GSA). This chain is Glutamyl-tRNA reductase, found in Pseudomonas syringae pv. syringae (strain B728a).